Consider the following 120-residue polypeptide: Large ribosomal subunit protein uL18 (120 aa).

The protein belongs to the universal ribosomal protein uL18 family. As to quaternary structure, part of the 50S ribosomal subunit; part of the 5S rRNA/L5/L18/L25 subcomplex. Contacts the 5S and 23S rRNAs.

This is one of the proteins that bind and probably mediate the attachment of the 5S RNA into the large ribosomal subunit, where it forms part of the central protuberance. The sequence is that of Large ribosomal subunit protein uL18 from Brucella abortus (strain S19).